Reading from the N-terminus, the 52-residue chain is UPF0181 protein NTHI1697 (52 aa).

Belongs to the UPF0181 family.

The protein is UPF0181 protein NTHI1697 of Haemophilus influenzae (strain 86-028NP).